Consider the following 155-residue polypeptide: CASP-like protein 5B2 (155 aa).

Topologically, residues 1–18 are cytoplasmic; it reads MWEVAWWRPGTWGGLAMR. The chain crosses the membrane as a helical span at residues 19–39; it reads VGQVAFAGASIGVMASGAGFA. N-linked (GlcNAc...) asparagine glycosylation occurs at Asn40. Over 40 to 43 the chain is Extracellular; that stretch reads NYTA. A helical membrane pass occupies residues 44–64; that stretch reads FCYLIASMGLQSLWSLGLACL. The Cytoplasmic segment spans residues 65-77; the sequence is DVYALTVKRDLNN. A helical transmembrane segment spans residues 78 to 98; it reads ALLVSLFVIGDWVTALLSFAA. Over 99–128 the chain is Extracellular; it reads SCSAGGVMVLFKRDVLFCRRYPQLPCGRFE. The chain crosses the membrane as a helical span at residues 129–149; that stretch reads LAVALAFLSWALSATSAIIMF. Topologically, residues 150-155 are cytoplasmic; it reads CLLAAF.

It belongs to the Casparian strip membrane proteins (CASP) family. Homodimer and heterodimers.

The protein resides in the cell membrane. The sequence is that of CASP-like protein 5B2 from Oryza sativa subsp. indica (Rice).